Reading from the N-terminus, the 428-residue chain is AA14 family lytic polysaccharide monooxygenase A (428 aa).

The N-terminal stretch at Met-1–Ala-21 is a signal peptide. N-linked (GlcNAc...) asparagine glycosylation is found at Asn-34 and Asn-52. Cystine bridges form between Cys-88-Cys-112, Cys-131-Cys-158, Cys-174-Cys-179, Cys-181-Cys-203, and Cys-223-Cys-239. The N-linked (GlcNAc...) asparagine glycan is linked to Asn-155. 2 disordered regions span residues Lys-216–Cys-239 and Ser-292–His-428. A compositionally biased stretch (basic and acidic residues) spans Cys-223 to Pro-232. An N-linked (GlcNAc...) asparagine glycan is attached at Asn-238. The segment covering Ser-292–Pro-379 has biased composition (low complexity). Residues Ile-380–Arg-402 are compositionally biased toward polar residues. Residues Gln-414–His-428 show a composition bias toward basic residues.

Cu(2+) serves as cofactor.

The protein localises to the secreted. Functionally, lytic polysaccharide monooxygenase (LPMO) showing oxidase and peroxidase activities that are common for LPMOs. Catalysis by LPMOs requires the reduction of the active-site copper from Cu(II) to Cu(I) by a reducing agent and H(2)O(2) or O(2) as a cosubstrate. Shows no activity on cellulose-associated xylan or any other tested polysaccharide substrate, meaning that the substrate rremains unknown. The polypeptide is AA14 family lytic polysaccharide monooxygenase A (Trametes coccinea (strain BRFM310) (Pycnoporus coccineus)).